Here is a 341-residue protein sequence, read N- to C-terminus: tRNA N6-adenosine threonylcarbamoyltransferase (341 aa).

2 residues coordinate Fe cation: His-111 and His-115. Substrate is bound by residues 134–138, Asp-167, Gly-180, and Asn-276; that span reads LVSGG. Asp-304 is a Fe cation binding site.

Belongs to the KAE1 / TsaD family. Fe(2+) serves as cofactor.

The protein localises to the cytoplasm. The catalysed reaction is L-threonylcarbamoyladenylate + adenosine(37) in tRNA = N(6)-L-threonylcarbamoyladenosine(37) in tRNA + AMP + H(+). In terms of biological role, required for the formation of a threonylcarbamoyl group on adenosine at position 37 (t(6)A37) in tRNAs that read codons beginning with adenine. Is involved in the transfer of the threonylcarbamoyl moiety of threonylcarbamoyl-AMP (TC-AMP) to the N6 group of A37, together with TsaE and TsaB. TsaD likely plays a direct catalytic role in this reaction. This chain is tRNA N6-adenosine threonylcarbamoyltransferase, found in Pseudomonas paraeruginosa (strain DSM 24068 / PA7) (Pseudomonas aeruginosa (strain PA7)).